A 486-amino-acid polypeptide reads, in one-letter code: MRTEWIAKRSGHKNVSQMHYGRQGIITEEMNFVAQRENLPAELIRAEVARGRMIIPANINHTNLEPMCIGIASRCKVNANIGASPNTSDITKEVDKLKLSIKYGADTVMDLSTGGGNLDEIRTAIINASPVPIGTVPVYQAVESVHGRIENLTADDFLHVIEKHAQQGVDYQTIHAGILIEHLPLVRSRITGIVSRGGGIIAKWMLHHHKQNPLYTHFDDIIEIFKKYDVSFSLGDSLRPGCTHDASDEAQLAELKTLGQLTRRAWGHEVQVMVEGPGHVPMDQIEFNVKKQMEECSSPPLNALDLDPLASNANEQMEKFNVLGPAPFYVLGPLVTDIAPGYDHITSAIGAAMAGWYGTAMLCYVTPKEHLGLPNAEDVRNGLIAYKIAAHAADIGRHRQGARDRDDELSAARYNFDWNRQFELSLDPERAKEYHDETLPADIYKTAEFCSMCGPKFCPMQTKVDADALTELEKFLAKEKEVVTQS.

Substrate-binding positions include Asn-80, Met-109, Tyr-139, His-175, 195–197 (SRG), 236–239 (DSLR), and Glu-275. A Zn(2+)-binding site is contributed by His-279. Substrate is bound at residue Tyr-329. Residue His-370 participates in Zn(2+) binding. [4Fe-4S] cluster-binding residues include Cys-450, Cys-453, and Cys-458.

It belongs to the ThiC family. [4Fe-4S] cluster is required as a cofactor.

It catalyses the reaction 5-amino-1-(5-phospho-beta-D-ribosyl)imidazole + S-adenosyl-L-methionine = 4-amino-2-methyl-5-(phosphooxymethyl)pyrimidine + CO + 5'-deoxyadenosine + formate + L-methionine + 3 H(+). The protein operates within cofactor biosynthesis; thiamine diphosphate biosynthesis. In terms of biological role, catalyzes the synthesis of the hydroxymethylpyrimidine phosphate (HMP-P) moiety of thiamine from aminoimidazole ribotide (AIR) in a radical S-adenosyl-L-methionine (SAM)-dependent reaction. This chain is Phosphomethylpyrimidine synthase, found in Trichodesmium erythraeum (strain IMS101).